The primary structure comprises 443 residues: Differentially expressed in FDCP 8 homolog B (443 aa).

The interval 14–49 (HLNPFDKKGGAERHPADSETQPCKDSSTSSPLSVPE) is disordered. The segment covering 17 to 30 (PFDKKGGAERHPAD) has biased composition (basic and acidic residues). Over residues 31–45 (SETQPCKDSSTSSPL) the composition is skewed to polar residues. 2 Phorbol-ester/DAG-type zinc fingers span residues 134–185 (EHRF…TKPC) and 364–424 (IHTT…STSC).

It belongs to the DEF8 family.

Positively regulates lysosome peripheral distribution and ruffled border formation in osteoclasts. Involved in bone resorption. The chain is Differentially expressed in FDCP 8 homolog B (def8-b) from Xenopus laevis (African clawed frog).